Reading from the N-terminus, the 285-residue chain is NADPH-dependent 7-cyano-7-deazaguanine reductase (285 aa).

91 to 93 (IES) serves as a coordination point for substrate. 93-94 (SK) serves as a coordination point for NADPH. Catalysis depends on C191, which acts as the Thioimide intermediate. Residue D198 is the Proton donor of the active site. 230-231 (HE) contributes to the substrate binding site. 259–260 (RG) contributes to the NADPH binding site.

The protein belongs to the GTP cyclohydrolase I family. QueF type 2 subfamily. In terms of assembly, homodimer.

The protein localises to the cytoplasm. The catalysed reaction is 7-aminomethyl-7-carbaguanine + 2 NADP(+) = 7-cyano-7-deazaguanine + 2 NADPH + 3 H(+). It participates in tRNA modification; tRNA-queuosine biosynthesis. Functionally, catalyzes the NADPH-dependent reduction of 7-cyano-7-deazaguanine (preQ0) to 7-aminomethyl-7-deazaguanine (preQ1). This is NADPH-dependent 7-cyano-7-deazaguanine reductase from Legionella pneumophila (strain Lens).